A 417-amino-acid chain; its full sequence is NADH-quinone oxidoreductase subunit D (417 aa).

This sequence belongs to the complex I 49 kDa subunit family. As to quaternary structure, NDH-1 is composed of 14 different subunits. Subunits NuoB, C, D, E, F, and G constitute the peripheral sector of the complex.

Its subcellular location is the cell inner membrane. It catalyses the reaction a quinone + NADH + 5 H(+)(in) = a quinol + NAD(+) + 4 H(+)(out). Functionally, NDH-1 shuttles electrons from NADH, via FMN and iron-sulfur (Fe-S) centers, to quinones in the respiratory chain. The immediate electron acceptor for the enzyme in this species is believed to be ubiquinone. Couples the redox reaction to proton translocation (for every two electrons transferred, four hydrogen ions are translocated across the cytoplasmic membrane), and thus conserves the redox energy in a proton gradient. The protein is NADH-quinone oxidoreductase subunit D of Burkholderia ambifaria (strain MC40-6).